The following is a 71-amino-acid chain: Ubiquinol-cytochrome c reductase complex assembly factor 6 (71 aa).

Residues 1-8 (MPAGVPMS) lie on the Mitochondrial matrix side of the membrane. The helical; Signal-anchor for type II membrane protein transmembrane segment at 9–25 (TYLKMFAASLLAMCAGA) threads the bilayer. At 26–71 (EVVHRYYRPDLTIPEIPPKRGELKTELLGLKERKHKPQVSQQEELK) the chain is on the mitochondrial intermembrane side.

This sequence belongs to the UQCC6 family. As to quaternary structure, interacts with UQCRC1. Interacts with UQCRQ. Interacts with UQCC5. Forms a complex, named COMB/coordinator of mitochondrial CYTB biogenesis, composed of UQCC1, UQCC2, UQCC4, UQCC5 and UQCC6; stabilizes nascent cytochrome b/MT-CYB and promotes its membrane insertion. Forms a complex, named COMA, composed of UQCC1, UQCC2 and UQCC4; activates MT-CYB translation. Forms a complex, named COMC, composed of UQCC1, UQCC2; UQCC3 and UQCC4; mediates MT-CYB hemylation and association with the first nuclear-encoded complex III subunit UQCRQ. Interacts with MT-CYB. As to expression, cardiac and skeletal muscle (at protein level).

The protein resides in the mitochondrion inner membrane. Its function is as follows. Required for the assembly and stability of the mitochondrial ubiquinol-cytochrome c reductase complex (complex III (CIII) or cytochrome b-c1 complex), a multisubunit transmembrane complex that is part of the mitochondrial electron transport chain (ETC) which drives oxidative phosphorylation. Mediates early complex III biogenesis. Participates in regulating the levels of electron transport chain proteins, and therefore energy supply, in response to changes in energy demand. Also required for cytochrome c oxidase complex (complex IV) assembly. In Homo sapiens (Human), this protein is Ubiquinol-cytochrome c reductase complex assembly factor 6.